Here is a 410-residue protein sequence, read N- to C-terminus: MAASNQSEVNIGMVGHVDHGKTSLTRKLTGVWTDTHSEELKRGISIRLGYADCEIKKCETCDEPECYTVDKKCDACGGKVSTLRKISFVDAPGHETLMATMLSGASLMDGAILVIAASEECPQPQTKEHLMALDALGVEHILIVQNKIDLVSEEAAIENYNQIKEFTKGTVAENAPIIPVSAHHGANLDVLLKAIQEFIPTPERDETLTPKLYVARSFDVNKPGSEIKDLKGGVIGGSIIQGALKVGDDLEIRPGIKVTEGNKTHWVPIVTKIISLGVGGKKLKSAAPGGLIGVGTELDPNLTKSDALSGSLAGLPGTLPETLEKMVIKPQLLERVVGSQDELIIEPLKTNEVLMLNVGTSTTVGVTVSARADKAEIKLKLPVCADKGDRVAISRKIGSRWRLIGYGIIL.

Residues 6–203 (QSEVNIGMVG…AIQEFIPTPE (198 aa)) form the tr-type G domain. Residues 15–22 (GHVDHGKT) form a G1 region. Mg(2+)-binding residues include D18, T22, G43, and S45. 18-23 (DHGKTS) lines the GTP pocket. Residues 43–47 (GISIR) are G2. Positions 58, 61, 73, and 76 each coordinate Zn(2+). The segment at 90–93 (DAPG) is G3. GTP contacts are provided by residues 146–149 (NKID) and 181–183 (SAH). The interval 146–149 (NKID) is G4. Residues 181–183 (SAH) form a G5 region.

It belongs to the TRAFAC class translation factor GTPase superfamily. Classic translation factor GTPase family. EIF2G subfamily. In terms of assembly, heterotrimer composed of an alpha, a beta and a gamma chain. Mg(2+) is required as a cofactor.

The enzyme catalyses GTP + H2O = GDP + phosphate + H(+). EIF-2 functions in the early steps of protein synthesis by forming a ternary complex with GTP and initiator tRNA. The protein is Translation initiation factor 2 subunit gamma of Methanococcus maripaludis (strain C7 / ATCC BAA-1331).